Here is a 549-residue protein sequence, read N- to C-terminus: Arginine--tRNA ligase (549 aa).

Positions 132–142 (ANPTGPLHIGH) match the 'HIGH' region motif.

The protein belongs to the class-I aminoacyl-tRNA synthetase family. As to quaternary structure, monomer.

It localises to the cytoplasm. The catalysed reaction is tRNA(Arg) + L-arginine + ATP = L-arginyl-tRNA(Arg) + AMP + diphosphate. This Paenarthrobacter aurescens (strain TC1) protein is Arginine--tRNA ligase.